The following is a 395-amino-acid chain: Biotin biosynthesis cytochrome P450 (395 aa).

Residue R60 participates in substrate binding. 89–93 (HRRLR) contributes to the heme binding site. 169 to 173 (IDFTR) serves as a coordination point for substrate. C250 and C275 are joined by a disulfide. 285–287 (TAR) contributes to the heme binding site. Residue Y307 participates in substrate binding. Heme-binding positions include 343 to 345 (HVC) and C345.

It depends on heme as a cofactor.

It catalyses the reaction a C2-C8-saturated long-chain fatty acyl-[ACP] + 2 reduced [flavodoxin] + 3 O2 = 6-carboxyhexanoyl-[ACP] + a fatty aldehyde + 2 oxidized [flavodoxin] + 3 H2O + 3 H(+). Its pathway is cofactor biosynthesis; biotin biosynthesis. Catalyzes the C-C bond cleavage of fatty acid linked to acyl carrier protein (ACP) to generate pimelic acid for biotin biosynthesis. It has high affinity for long-chain fatty acids with the greatest affinity for myristic acid. The sequence is that of Biotin biosynthesis cytochrome P450 (bioI) from Bacillus subtilis (strain 168).